We begin with the raw amino-acid sequence, 533 residues long: Bifunctional purine biosynthesis protein PurH (533 aa).

The 148-residue stretch at 1-148 folds into the MGS-like domain; that stretch reads MQPNRPIRQA…KNHQDVAIVV (148 aa).

Belongs to the PurH family.

It catalyses the reaction (6R)-10-formyltetrahydrofolate + 5-amino-1-(5-phospho-beta-D-ribosyl)imidazole-4-carboxamide = 5-formamido-1-(5-phospho-D-ribosyl)imidazole-4-carboxamide + (6S)-5,6,7,8-tetrahydrofolate. The catalysed reaction is IMP + H2O = 5-formamido-1-(5-phospho-D-ribosyl)imidazole-4-carboxamide. Its pathway is purine metabolism; IMP biosynthesis via de novo pathway; 5-formamido-1-(5-phospho-D-ribosyl)imidazole-4-carboxamide from 5-amino-1-(5-phospho-D-ribosyl)imidazole-4-carboxamide (10-formyl THF route): step 1/1. The protein operates within purine metabolism; IMP biosynthesis via de novo pathway; IMP from 5-formamido-1-(5-phospho-D-ribosyl)imidazole-4-carboxamide: step 1/1. The chain is Bifunctional purine biosynthesis protein PurH from Pasteurella multocida (strain Pm70).